Consider the following 170-residue polypeptide: UPF0161 protein At3g09310 (170 aa).

Disordered stretches follow at residues Cys-49–Leu-70 and Ser-147–Ile-170. A compositionally biased stretch (acidic residues) spans Gly-154 to Ile-170.

This sequence belongs to the UPF0161 family.

In Arabidopsis thaliana (Mouse-ear cress), this protein is UPF0161 protein At3g09310.